A 374-amino-acid chain; its full sequence is Putative glutamate--cysteine ligase 2-2 (374 aa).

It belongs to the glutamate--cysteine ligase type 2 family. YbdK subfamily.

It carries out the reaction L-cysteine + L-glutamate + ATP = gamma-L-glutamyl-L-cysteine + ADP + phosphate + H(+). Its function is as follows. ATP-dependent carboxylate-amine ligase which exhibits weak glutamate--cysteine ligase activity. This chain is Putative glutamate--cysteine ligase 2-2, found in Rhodococcus jostii (strain RHA1).